A 334-amino-acid polypeptide reads, in one-letter code: GTP 3',8-cyclase (334 aa).

The Radical SAM core domain maps to 13-239 (RFQRKFYYLR…KARADNDGPA (227 aa)). R22 provides a ligand contact to GTP. [4Fe-4S] cluster-binding residues include C29 and C33. An S-adenosyl-L-methionine-binding site is contributed by Y35. C36 provides a ligand contact to [4Fe-4S] cluster. Residue R73 coordinates GTP. S-adenosyl-L-methionine is bound at residue G77. A GTP-binding site is contributed by T104. S128 provides a ligand contact to S-adenosyl-L-methionine. A GTP-binding site is contributed by K165. M199 is an S-adenosyl-L-methionine binding site. Residues C262 and C265 each contribute to the [4Fe-4S] cluster site. Residue 267–269 (RLR) coordinates GTP. A [4Fe-4S] cluster-binding site is contributed by C279.

This sequence belongs to the radical SAM superfamily. MoaA family. In terms of assembly, monomer and homodimer. [4Fe-4S] cluster serves as cofactor.

It carries out the reaction GTP + AH2 + S-adenosyl-L-methionine = (8S)-3',8-cyclo-7,8-dihydroguanosine 5'-triphosphate + 5'-deoxyadenosine + L-methionine + A + H(+). It participates in cofactor biosynthesis; molybdopterin biosynthesis. In terms of biological role, catalyzes the cyclization of GTP to (8S)-3',8-cyclo-7,8-dihydroguanosine 5'-triphosphate. The polypeptide is GTP 3',8-cyclase (Vibrio cholerae serotype O1 (strain M66-2)).